Reading from the N-terminus, the 94-residue chain is MLKPLGDRVIISFVETEEKSVGGFVLAGASHDATKTAKVLAVGDGIRTLTGELVAPSVAEGDTVLVENGAGLEVKDGNEKVTVVRESDIVAVVK.

This sequence belongs to the GroES chaperonin family. As to quaternary structure, heptamer of 7 subunits arranged in a ring. Interacts with the chaperonin GroEL.

It is found in the cytoplasm. In terms of biological role, together with the chaperonin GroEL, plays an essential role in assisting protein folding. The GroEL-GroES system forms a nano-cage that allows encapsulation of the non-native substrate proteins and provides a physical environment optimized to promote and accelerate protein folding. GroES binds to the apical surface of the GroEL ring, thereby capping the opening of the GroEL channel. This Streptococcus agalactiae serotype III (strain NEM316) protein is Co-chaperonin GroES.